Consider the following 374-residue polypeptide: Queuine tRNA-ribosyltransferase (374 aa).

Residue Asp89 is the Proton acceptor of the active site. Residues 89–93, Asp143, Gln187, and Gly214 contribute to the substrate site; that span reads DSGGF. Residues 245–251 are RNA binding; sequence GVGKPED. The active-site Nucleophile is the Asp264. The tract at residues 269 to 273 is RNA binding; important for wobble base 34 recognition; that stretch reads TRNAR. Residues Cys302, Cys304, Cys307, and His333 each contribute to the Zn(2+) site.

This sequence belongs to the queuine tRNA-ribosyltransferase family. As to quaternary structure, homodimer. Within each dimer, one monomer is responsible for RNA recognition and catalysis, while the other monomer binds to the replacement base PreQ1. Zn(2+) is required as a cofactor.

It catalyses the reaction 7-aminomethyl-7-carbaguanine + guanosine(34) in tRNA = 7-aminomethyl-7-carbaguanosine(34) in tRNA + guanine. It functions in the pathway tRNA modification; tRNA-queuosine biosynthesis. In terms of biological role, catalyzes the base-exchange of a guanine (G) residue with the queuine precursor 7-aminomethyl-7-deazaguanine (PreQ1) at position 34 (anticodon wobble position) in tRNAs with GU(N) anticodons (tRNA-Asp, -Asn, -His and -Tyr). Catalysis occurs through a double-displacement mechanism. The nucleophile active site attacks the C1' of nucleotide 34 to detach the guanine base from the RNA, forming a covalent enzyme-RNA intermediate. The proton acceptor active site deprotonates the incoming PreQ1, allowing a nucleophilic attack on the C1' of the ribose to form the product. After dissociation, two additional enzymatic reactions on the tRNA convert PreQ1 to queuine (Q), resulting in the hypermodified nucleoside queuosine (7-(((4,5-cis-dihydroxy-2-cyclopenten-1-yl)amino)methyl)-7-deazaguanosine). This Psychromonas ingrahamii (strain DSM 17664 / CCUG 51855 / 37) protein is Queuine tRNA-ribosyltransferase.